Reading from the N-terminus, the 65-residue chain is Trypsin inhibitor 1 (65 aa).

3 cysteine pairs are disulfide-bonded: Cys39–Cys56, Cys46–Cys58, and Cys52–Cys64.

The protein belongs to the protease inhibitor I7 (squash-type serine protease inhibitor) family.

Its subcellular location is the secreted. Functionally, inhibits trypsin. This Trichosanthes kirilowii (Chinese snake gourd) protein is Trypsin inhibitor 1.